The chain runs to 30 residues: Cysteine-rich venom protein annuliferin-a (30 aa).

Belongs to the CRISP family. In terms of processing, contains 8 disulfide bonds. Expressed by the venom gland.

It localises to the secreted. In terms of biological role, inhibits calcium-activated potassium channels (KCa), voltage-gated potassium channel (Kv), and the calcium release channel/ryanodine receptor (RyR). In Naja annulifera (Banded Egyptian cobra), this protein is Cysteine-rich venom protein annuliferin-a.